Consider the following 1032-residue polypeptide: Integrin alpha-4 (1032 aa).

The signal sequence occupies residues 1–34; that stretch reads MIRDLGKVGKVSLLLDHIWTGILLYTVILTPADC. The Extracellular segment spans residues 35–974; it reads YNIDESSPML…LHNLKPKKHV (940 aa). 7 FG-GAP repeats span residues 36-100, 113-177, 186-237, 238-291, 292-351, 353-411, and 415-477; these read NIDE…PNRT, KCGK…TELS, DHVR…TIKS, YVDL…EKQL, TILF…GAME, LKFE…GITP, and QRLQ…LPST. 2 N-linked (GlcNAc...) asparagine glycosylation sites follow: Asn81 and Asn98. Disulfide bonds link Cys91–Cys101, Cys144–Cys165, and Cys183–Cys198. A glycan (N-linked (GlcNAc...) asparagine) is linked at Asn229. Positions 314, 316, 318, 320, 322, 376, 378, 380, 384, 438, 440, 442, 444, and 446 each coordinate Ca(2+). Residue Asn479 is glycosylated (N-linked (GlcNAc...) asparagine). Cysteines 485 and 494 form a disulfide. N-linked (GlcNAc...) asparagine glycans are attached at residues Asn496, Asn517, Asn537, Asn626, and Asn660. 2 disulfides stabilise this stretch: Cys500–Cys556 and Cys622–Cys627. Cys698 and Cys712 are joined by a disulfide. N-linked (GlcNAc...) asparagine glycosylation is found at Asn746 and Asn857. 2 disulfides stabilise this stretch: Cys853-Cys889 and Cys896-Cys901. A helical membrane pass occupies residues 975 to 998; the sequence is IYMIIGISLLLGILLFSLLTYILW. Residues 999–1032 lie on the Cytoplasmic side of the membrane; the sequence is KVGFFRRKYQPIGTEETSRRESWNYLNKDEKEVK. The GFFKR motif motif lies at 1001 to 1005; it reads GFFRR.

This sequence belongs to the integrin alpha chain family. In terms of assembly, heterodimer of an alpha and a beta subunit.

The protein localises to the membrane. Its function is as follows. Fibronectin and V-CAM adhesion receptor. In Xenopus laevis (African clawed frog), this protein is Integrin alpha-4 (itga4).